The sequence spans 299 residues: AUGMIN subunit 1 (299 aa).

N-acetylserine is present on Ser2. 2 coiled-coil regions span residues 76 to 96 and 164 to 184; these read RLKASEYRAQAARIREILESA and RKAIQRLTYLKKILAQLEDDV.

This sequence belongs to the HAUS1 family. As to quaternary structure, part of the augmin complex composed of 8 subunits. The complex acts on microtubules and interacts with gamma-tubulin in spindles and the phragmoplast. Interacts with AUG3.

The protein localises to the cytoplasm. Its subcellular location is the cytoskeleton. It localises to the spindle. The protein resides in the phragmoplast. Functionally, involved in microtubules reorganization during spindle and phragmoplast development. The sequence is that of AUGMIN subunit 1 from Arabidopsis thaliana (Mouse-ear cress).